An 861-amino-acid chain; its full sequence is ToMV resistance protein Tm-2(2) (861 aa).

Positions 63 to 83 (VKNLLKDIQELAGDVEDLLDD) form a coiled coil. One can recognise an NB-ARC domain in the interval 162–388 (DDFNMLQAKL…LESMGHKVQD (227 aa)). 185–192 (GMPGLGKT) is a binding site for ATP. LRR repeat units follow at residues 225-248 (LDIAKQIGLTEQKMKENLEDNLRS), 305-327 (LHALQPLESEKSFELFTKKIFNF), 388-411 (DGCAKVLALSYNDLPIASRPCFLY), 449-472 (LAEDVLNDLVSRNLIQLAKRTYNG), 510-536 (VARLRRITFYSDNVMIEFFRSNPKLEK), 585-608 (MTCLRYLRLEGNICGKLPNSIVKL), 609-631 (TRLETIDIDRRSLIQPPSGVWES), 652-680 (ISSFYPNIYSLHPNNLQTLMWIPDKFFEP), 689-710 (LRKLGILGVSNSTVKMLSIFSP), 712-735 (LKALEVLKLSFSSDPSEQIKLSSY), 736-758 (PHIAKLHLNVNRTMALNSQSFPP), 784-810 (LRKLKMFICKYNEEKMDLSGEANGYSF), and 811-835 (PQLEVLHIHSPNGLSEVTCTDDVSM).

Belongs to the disease resistance NB-LRR family. As to quaternary structure, (Microbial infection) Interacts with tobamoviruses mouvement protein (e.g. tobacco mosaic virus (TMV) MP, AC P03583) at the plasma membrane; this interaction triggers defense responses leading to programmed cell death. In terms of assembly, binds to HSP90 proteins (e.g. HSP90-1 and Nicotiana benthamiana HSP90-1); this interaction seems required for defense responses toward tobamoviruses.

The protein localises to the cell membrane. Its function is as follows. Inhibitor of viral mouvements which confers resistance to some tobamoviruses including tomato mosaic virus (ToMV) (e.g. strains L, B7 and ToMV1-2) and tobacco mosaic virus (TMV), but not to resistance-breaking isolates (e.g. LIIA and ToMV2(2)) ToMV and tomato brown rugose fruit virus (ToBRFV). Elicits a hypersensitive reaction in response to avirulent (Avr) movement proteins from resistance inducing tobamoviruses (e.g. ToMV and TMV) strains, thus leading to programmed cell death; this local extreme resistance requires rbcS. The sequence is that of ToMV resistance protein Tm-2(2) from Solanum lycopersicum (Tomato).